Consider the following 220-residue polypeptide: Regulatory protein VanRB (220 aa).

One can recognise a Response regulatory domain in the interval 4–117 (RILLVEDDDH…ILLKRVEALL (114 aa)). Asp53 bears the 4-aspartylphosphate mark. Residues 124 to 218 (AKEFRVGRLT…IRGVGYRLEE (95 aa)) constitute a DNA-binding region (ompR/PhoB-type).

In terms of processing, may be phosphorylated by VanSB. May also be dephosphorylated by VanSB.

The protein resides in the cytoplasm. In terms of biological role, member of the two-component regulatory system VanSB/VanRB. Activates the transcription of vanSB, vanYB and vanW in response to vancomycin which results in vancomycin resistance. This is Regulatory protein VanRB (vanRB) from Enterococcus faecalis (strain ATCC 700802 / V583).